The primary structure comprises 419 residues: UDP-N-acetylglucosamine 1-carboxyvinyltransferase 1 (419 aa).

Lysine 22 to asparagine 23 provides a ligand contact to phosphoenolpyruvate. Arginine 92 is a UDP-N-acetyl-alpha-D-glucosamine binding site. Cysteine 116 serves as the catalytic Proton donor. Cysteine 116 is modified (2-(S-cysteinyl)pyruvic acid O-phosphothioketal). Residues arginine 121 to leucine 125, aspartate 306, and isoleucine 328 contribute to the UDP-N-acetyl-alpha-D-glucosamine site.

Belongs to the EPSP synthase family. MurA subfamily.

It localises to the cytoplasm. It catalyses the reaction phosphoenolpyruvate + UDP-N-acetyl-alpha-D-glucosamine = UDP-N-acetyl-3-O-(1-carboxyvinyl)-alpha-D-glucosamine + phosphate. It functions in the pathway cell wall biogenesis; peptidoglycan biosynthesis. In terms of biological role, cell wall formation. Adds enolpyruvyl to UDP-N-acetylglucosamine. The polypeptide is UDP-N-acetylglucosamine 1-carboxyvinyltransferase 1 (Streptococcus agalactiae serotype Ia (strain ATCC 27591 / A909 / CDC SS700)).